A 263-amino-acid chain; its full sequence is Phosphatidylglycerol--prolipoprotein diacylglyceryl transferase (263 aa).

Helical transmembrane passes span 10 to 30 (VAIT…LFGF), 56 to 76 (MVTY…ILFY), 91 to 111 (IWNG…AMWL), and 117 to 137 (GLGF…GLFF). A 1,2-diacyl-sn-glycero-3-phospho-(1'-sn-glycerol) is bound at residue arginine 139. The next 3 membrane-spanning stretches (helical) occupy residues 171 to 191 (PSQL…LWVF), 199 to 219 (GHVS…VEFV), and 231 to 251 (FGWL…GLWL).

This sequence belongs to the Lgt family.

The protein resides in the cell inner membrane. It carries out the reaction L-cysteinyl-[prolipoprotein] + a 1,2-diacyl-sn-glycero-3-phospho-(1'-sn-glycerol) = an S-1,2-diacyl-sn-glyceryl-L-cysteinyl-[prolipoprotein] + sn-glycerol 1-phosphate + H(+). It functions in the pathway protein modification; lipoprotein biosynthesis (diacylglyceryl transfer). Catalyzes the transfer of the diacylglyceryl group from phosphatidylglycerol to the sulfhydryl group of the N-terminal cysteine of a prolipoprotein, the first step in the formation of mature lipoproteins. The sequence is that of Phosphatidylglycerol--prolipoprotein diacylglyceryl transferase from Nitratidesulfovibrio vulgaris (strain DP4) (Desulfovibrio vulgaris).